The following is a 258-amino-acid chain: Aspartate/glutamate leucyltransferase (258 aa).

The protein belongs to the R-transferase family. Bpt subfamily.

The protein localises to the cytoplasm. The enzyme catalyses N-terminal L-glutamyl-[protein] + L-leucyl-tRNA(Leu) = N-terminal L-leucyl-L-glutamyl-[protein] + tRNA(Leu) + H(+). It carries out the reaction N-terminal L-aspartyl-[protein] + L-leucyl-tRNA(Leu) = N-terminal L-leucyl-L-aspartyl-[protein] + tRNA(Leu) + H(+). In terms of biological role, functions in the N-end rule pathway of protein degradation where it conjugates Leu from its aminoacyl-tRNA to the N-termini of proteins containing an N-terminal aspartate or glutamate. The sequence is that of Aspartate/glutamate leucyltransferase from Rhodopseudomonas palustris (strain TIE-1).